Consider the following 375-residue polypeptide: Growth/differentiation factor 8 (375 aa).

The signal sequence occupies residues 1–18 (MQKLQIFVYIYLFMLTVA). A propeptide spanning residues 19–266 (GPVDLNENSE…VTDTPKRARR (248 aa)) is cleaved from the precursor. Asn-48 and Asn-71 each carry an N-linked (GlcNAc...) asparagine glycan. Intrachain disulfides connect Cys-272–Cys-282, Cys-281–Cys-340, Cys-309–Cys-372, and Cys-313–Cys-374.

It belongs to the TGF-beta family. Homodimer; disulfide-linked. Interacts with WFIKKN2, leading to inhibit its activity. Interacts with FSTL3. In terms of processing, synthesized as large precursor molecule that undergoes proteolytic cleavage to generate an N-terminal propeptide and a disulfide linked C-terminal dimer, which is the biologically active molecule. The circulating form consists of a latent complex of the C-terminal dimer and other proteins, including its propeptide, which maintain the C-terminal dimer in a latent, inactive state. Ligand activation requires additional cleavage of the prodomain by a tolloid-like metalloproteinase.

It is found in the secreted. Acts specifically as a negative regulator of skeletal muscle growth. The sequence is that of Growth/differentiation factor 8 (MSTN) from Sylvicapra grimmia (Grey duiker).